A 338-amino-acid chain; its full sequence is Beta-ketoacyl-[acyl-carrier-protein] synthase III 2 (338 aa).

Active-site residues include Cys119 and His255. Residues 256-260 (QANIR) are ACP-binding. Residue Asn285 is part of the active site.

The protein belongs to the thiolase-like superfamily. FabH family. Homodimer.

The protein resides in the cytoplasm. It catalyses the reaction malonyl-[ACP] + acetyl-CoA + H(+) = 3-oxobutanoyl-[ACP] + CO2 + CoA. It participates in lipid metabolism; fatty acid biosynthesis. Catalyzes the condensation reaction of fatty acid synthesis by the addition to an acyl acceptor of two carbons from malonyl-ACP. Catalyzes the first condensation reaction which initiates fatty acid synthesis and may therefore play a role in governing the total rate of fatty acid production. Possesses both acetoacetyl-ACP synthase and acetyl transacylase activities. Its substrate specificity determines the biosynthesis of branched-chain and/or straight-chain of fatty acids. The chain is Beta-ketoacyl-[acyl-carrier-protein] synthase III 2 from Deinococcus radiodurans (strain ATCC 13939 / DSM 20539 / JCM 16871 / CCUG 27074 / LMG 4051 / NBRC 15346 / NCIMB 9279 / VKM B-1422 / R1).